Reading from the N-terminus, the 141-residue chain is Sperm-associated microtubule inner protein 10 (141 aa).

The span at 1-16 (MASEKDDGPALPKLDD) shows a compositional bias: basic and acidic residues. The segment at 1-33 (MASEKDDGPALPKLDDDNQTAENTCKPAEEQPQ) is disordered.

As to quaternary structure, microtubule inner protein component of sperm flagellar doublet microtubules. As to expression, expressed predominantly in the testis.

Its subcellular location is the cytoplasm. It localises to the cytoskeleton. It is found in the flagellum axoneme. Microtubule inner protein (MIP) part of the dynein-decorated doublet microtubules (DMTs) in flagellum axoneme, which is required for flagellum beating. May serve to reinforce and thus stabilize the microtubule structure in the sperm flagella. Involved in the regulation of sperm motility. This is Sperm-associated microtubule inner protein 10 (Spmip10) from Mus musculus (Mouse).